Here is a 481-residue protein sequence, read N- to C-terminus: MEWETIIGLEVHVQLATNTKIFSGSSTAFGAEPNTQACAIDLAMPGTLPTPNAEAFRFATMFGLAVNAEIGKRSVFERKNYFYPDLPKGYQTTQLAEPIVGPGYVDIQLADGSEKRVRIHHAHLEEDAGKSLHEDFHGMSGIDLNRAGTPLIEVVTEPDMRSAEEAVAFARKLHSIVTSLGICDGEMSQGSMRFDVNISVRLKGDEKLGTRTETKNLNSFRFMERCIEQEVERQIEVIEDGGKIIQETRLYDGETHKARSMRSKEEANDYRYFPCPDLLPVMLDDDFIDAARAAMPELPDARQLRFEESYGLSPYDAGIISADAATADFFEAVAAKCSDAKLAANWVMGEISARLNAEEIRITAAKVSAEQLAGLIARIKDQTISNKIAKQVFDAMWNGEGDADTIIEAKGLKQVSDSGALEKMVDDVMNANPAQVENYRKADPAKQPKMLGFFVGQVMKASKGQANPQQLNDILKKKLEN.

This sequence belongs to the GatB/GatE family. GatB subfamily. As to quaternary structure, heterotrimer of A, B and C subunits.

It carries out the reaction L-glutamyl-tRNA(Gln) + L-glutamine + ATP + H2O = L-glutaminyl-tRNA(Gln) + L-glutamate + ADP + phosphate + H(+). The catalysed reaction is L-aspartyl-tRNA(Asn) + L-glutamine + ATP + H2O = L-asparaginyl-tRNA(Asn) + L-glutamate + ADP + phosphate + 2 H(+). Functionally, allows the formation of correctly charged Asn-tRNA(Asn) or Gln-tRNA(Gln) through the transamidation of misacylated Asp-tRNA(Asn) or Glu-tRNA(Gln) in organisms which lack either or both of asparaginyl-tRNA or glutaminyl-tRNA synthetases. The reaction takes place in the presence of glutamine and ATP through an activated phospho-Asp-tRNA(Asn) or phospho-Glu-tRNA(Gln). The chain is Aspartyl/glutamyl-tRNA(Asn/Gln) amidotransferase subunit B from Teredinibacter turnerae (strain ATCC 39867 / T7901).